The primary structure comprises 298 residues: uncharacterized protein (298 aa).

Residues 1–17 show a composition bias toward basic and acidic residues; sequence MLTKSAENKRNRKDDSM. Positions 1–22 are disordered; the sequence is MLTKSAENKRNRKDDSMRPGQQ. The 61-residue stretch at 167 to 227 folds into the S1 motif domain; it reads NKELTGTVYR…EDGSVNLSLL (61 aa).

This is an uncharacterized protein from Bacillus subtilis (strain 168).